The sequence spans 127 residues: Fluoride-specific ion channel FluC (127 aa).

Transmembrane regions (helical) follow at residues 4–24 (LDYLTIAFGGAIGAVLRYLVS), 39–59 (GTIIVNSVGSFFLSFLMFAAI), 68–88 (AILFFGTGLLGAFTTFSTFTY), and 102–122 (VAYALANLLFAFTCAYFGMIL). 2 residues coordinate Na(+): Gly-78 and Thr-81.

The protein belongs to the fluoride channel Fluc/FEX (TC 1.A.43) family.

It is found in the cell inner membrane. The enzyme catalyses fluoride(in) = fluoride(out). Na(+) is not transported, but it plays an essential structural role and its presence is essential for fluoride channel function. Fluoride-specific ion channel. Important for reducing fluoride concentration in the cell, thus reducing its toxicity. The polypeptide is Fluoride-specific ion channel FluC (Thermotoga maritima (strain ATCC 43589 / DSM 3109 / JCM 10099 / NBRC 100826 / MSB8)).